The following is a 418-amino-acid chain: Histidine--tRNA ligase (418 aa).

Belongs to the class-II aminoacyl-tRNA synthetase family. Homodimer.

It is found in the cytoplasm. The catalysed reaction is tRNA(His) + L-histidine + ATP = L-histidyl-tRNA(His) + AMP + diphosphate + H(+). The sequence is that of Histidine--tRNA ligase from Thermoanaerobacter sp. (strain X514).